A 288-amino-acid polypeptide reads, in one-letter code: Extracellular ribonuclease (288 aa).

A signal peptide spans 1–26 (MTKKAWFLPLVCVLLISGWLAPAASA).

It is found in the secreted. Mg(2+)-activated ribonuclease which hydrolyzes RNA apparently nonspecifically into oligonucleotides with 5'-terminal phosphate. The chain is Extracellular ribonuclease (bsn) from Bacillus subtilis (strain 168).